A 186-amino-acid polypeptide reads, in one-letter code: Der GTPase-activating protein YihI (186 aa).

The interval 1–65 is disordered; sequence MARTKKTRRI…AGSRHSAVDT (65 aa). Composition is skewed to basic and acidic residues over residues 9–25 and 34–45; these read RITD…RPEN and TRYELDAKSREE.

It belongs to the YihI family. As to quaternary structure, interacts with Der.

In terms of biological role, a GTPase-activating protein (GAP) that modifies Der/EngA GTPase function. May play a role in ribosome biogenesis. This chain is Der GTPase-activating protein YihI, found in Histophilus somni (strain 129Pt) (Haemophilus somnus).